The chain runs to 228 residues: Pyridoxal phosphate homeostasis protein (228 aa).

At Lys-35 the chain carries N6-(pyridoxal phosphate)lysine.

This sequence belongs to the pyridoxal phosphate-binding protein YggS/PROSC family.

Its function is as follows. Pyridoxal 5'-phosphate (PLP)-binding protein, which is involved in PLP homeostasis. The polypeptide is Pyridoxal phosphate homeostasis protein (Aquifex aeolicus (strain VF5)).